A 195-amino-acid polypeptide reads, in one-letter code: Large ribosomal subunit protein bL9 (195 aa).

This sequence belongs to the bacterial ribosomal protein bL9 family.

Functionally, binds to the 23S rRNA. The polypeptide is Large ribosomal subunit protein bL9 (Rhodopseudomonas palustris (strain TIE-1)).